Consider the following 955-residue polypeptide: Disintegrin and metalloproteinase domain-containing protein 19 (955 aa).

Residues 1 to 25 form the signal peptide; that stretch reads MPGGAGAARLCLLAFALQPLRPRAA. Positions 26 to 202 are excised as a propeptide; that stretch reads REPGWTRGSE…QTKKRPRRMK (177 aa). Positions 130-137 match the Cysteine switch motif; that stretch reads STCRGIRG. C132 provides a ligand contact to Zn(2+). N-linked (GlcNAc...) asparagine glycosylation occurs at N144. Residues 203–699 lie on the Extracellular side of the membrane; it reads REDLNSMKYV…IDSGPMPPES (497 aa). The Peptidase M12B domain maps to 210–408; it reads KYVELYLVAD…GGGMCLSNMP (199 aa). Cystine bridges form between C320–C403, C360–C387, and C361–C370. H345 serves as a coordination point for Zn(2+). E346 is a catalytic residue. H349 and H355 together coordinate Zn(2+). The Disintegrin domain occupies 416 to 502; that stretch reads GRRCGNGYLE…HCPTNFYQMD (87 aa). N-linked (GlcNAc...) asparagine glycans are attached at residues N444 and N447. The cysteines at positions 474 and 494 are disulfide-linked. A glycan (N-linked (GlcNAc...) asparagine) is linked at N645. In terms of domain architecture, EGF-like spans 650–682; the sequence is ETEGCGKKCNGHGVCNNNQNCHCLPGWAPPFCN. Cystine bridges form between C654/C664, C658/C670, and C672/C681. Residues 700-720 form a helical membrane-spanning segment; that stretch reads VGPVVAGVLVAILVLAVLMLM. Residues 721-955 are Cytoplasmic-facing; that stretch reads YYCCRQNNKL…AKHSCFLVPA (235 aa). The segment covering 753–771 has biased composition (polar residues); sequence SQNSGTGHANPTFKLQTPQ. Residues 753 to 917 are disordered; the sequence is SQNSGTGHAN…LKVKAGTRGL (165 aa). Composition is skewed to pro residues over residues 787 to 796 and 833 to 844; these read SQPPPRPPPD and RPPPSRPIPPAP. Residues 833 to 844 carry the SH3-binding motif; it reads RPPPSRPIPPAP.

In terms of assembly, interacts with SH3PXD2A. Requires Zn(2+) as cofactor. In terms of processing, the precursor is cleaved by a furin endopeptidase. Expressed in many normal organ tissues and several cancer cell lines.

The protein resides in the membrane. Participates in the proteolytic processing of beta-type neuregulin isoforms which are involved in neurogenesis and synaptogenesis, suggesting a regulatory role in glial cell. Also cleaves alpha-2 macroglobulin. May be involved in osteoblast differentiation and/or osteoblast activity in bone. In Homo sapiens (Human), this protein is Disintegrin and metalloproteinase domain-containing protein 19 (ADAM19).